The chain runs to 211 residues: Large ribosomal subunit protein bL9 (211 aa).

Positions 183–211 (AAASEDEELAETAGVAPAEPSEEDDSAKA) are disordered. The segment covering 202–211 (PSEEDDSAKA) has biased composition (acidic residues).

This sequence belongs to the bacterial ribosomal protein bL9 family.

Binds to the 23S rRNA. This is Large ribosomal subunit protein bL9 from Roseobacter denitrificans (strain ATCC 33942 / OCh 114) (Erythrobacter sp. (strain OCh 114)).